The primary structure comprises 618 residues: UvrABC system protein C (618 aa).

The GIY-YIG domain occupies 13–92; sequence DKPGVYLMKN…IKKYRPKYNI (80 aa). The region spanning 204–239 is the UVR domain; sequence LDIVENFKLNMEKAAENLEFEKAAMLRDKINIIEKI.

It belongs to the UvrC family. Interacts with UvrB in an incision complex.

It is found in the cytoplasm. The UvrABC repair system catalyzes the recognition and processing of DNA lesions. UvrC both incises the 5' and 3' sides of the lesion. The N-terminal half is responsible for the 3' incision and the C-terminal half is responsible for the 5' incision. In Clostridium botulinum (strain Okra / Type B1), this protein is UvrABC system protein C.